Reading from the N-terminus, the 339-residue chain is Dihydroorotate dehydrogenase (quinone) (339 aa).

Residues 62 to 66 (AGMDK) and Thr-86 contribute to the FMN site. Substrate is bound at residue Lys-66. Residue 111-115 (NRMGF) coordinates substrate. Residues Asn-139 and Asn-172 each contribute to the FMN site. Asn-172 serves as a coordination point for substrate. Catalysis depends on Ser-175, which acts as the Nucleophile. Asn-177 is a substrate binding site. FMN-binding residues include Lys-217 and Thr-245. A substrate-binding site is contributed by 246–247 (NT). Residues Gly-268, Gly-297, and 318–319 (YS) each bind FMN.

It belongs to the dihydroorotate dehydrogenase family. Type 2 subfamily. As to quaternary structure, monomer. FMN is required as a cofactor.

The protein localises to the cell membrane. The enzyme catalyses (S)-dihydroorotate + a quinone = orotate + a quinol. It functions in the pathway pyrimidine metabolism; UMP biosynthesis via de novo pathway; orotate from (S)-dihydroorotate (quinone route): step 1/1. Functionally, catalyzes the conversion of dihydroorotate to orotate with quinone as electron acceptor. This Shewanella baltica (strain OS223) protein is Dihydroorotate dehydrogenase (quinone).